Here is a 59-residue protein sequence, read N- to C-terminus: Prokaryotic ubiquitin-like protein UBact (59 aa).

Residues 1 to 59 are disordered; the sequence is MEMTDPLRREEKKESSPDPKEESGPSRPDVSRPGRDSLLKRMKKVDPKQSEKYKQRTGQ. At glutamine 59 the chain carries Deamidated glutamine. An Isoglutamyl lysine isopeptide (Gln-Lys) (interchain with K-? in acceptor proteins) cross-link involves residue glutamine 59.

Belongs to the ubiquitin-like protein UBact family. May be modified by deamidation of its C-terminal glutamine to glutamate by the adjacently encoded deamidase. This could be a prerequisite to the subsequent conjugation, as shown in the other prokaryotic ubiquitin-like protein Pup.

May function as a protein modifier covalently attached to lysine residues of substrate proteins. This may serve to target the modified proteins for degradation by proteasomes. The sequence is that of Prokaryotic ubiquitin-like protein UBact from Nitrospina gracilis (strain 3/211).